A 112-amino-acid chain; its full sequence is Large ribosomal subunit protein bL17 (112 aa).

It belongs to the bacterial ribosomal protein bL17 family. Part of the 50S ribosomal subunit. Contacts protein L32.

This Desulfitobacterium hafniense (strain DSM 10664 / DCB-2) protein is Large ribosomal subunit protein bL17.